Reading from the N-terminus, the 881-residue chain is Tyrosine-protein kinase receptor TYRO3 (881 aa).

Positions methionine 1–alanine 28 are cleaved as a signal peptide. 2 Ig-like C2-type domains span residues leucine 29–serine 114 and proline 125–glutamate 206. The Extracellular portion of the chain corresponds to leucine 29 to tryptophan 414. Asparagine 37 and asparagine 49 each carry an N-linked (GlcNAc...) asparagine glycan. Cysteines 50 and 103 form a disulfide. Residue asparagine 143 is glycosylated (N-linked (GlcNAc...) asparagine). Cysteines 146 and 189 form a disulfide. Fibronectin type-III domains follow at residues proline 213–lysine 306 and isoleucine 311–glutamate 401. N-linked (GlcNAc...) asparagine glycans are attached at residues asparagine 216, asparagine 279, asparagine 351, and asparagine 365. The helical transmembrane segment at valine 415 to phenylalanine 435 threads the bilayer. The Cytoplasmic portion of the chain corresponds to leucine 436–leucine 881. One can recognise a Protein kinase domain in the interval phenylalanine 503–isoleucine 774. Residues leucine 509–valine 517 and lysine 535 contribute to the ATP site. The Proton acceptor role is filled by aspartate 640. A Phosphotyrosine; by autocatalysis modification is found at tyrosine 671. The interval glutamate 846–leucine 881 is disordered. Residues glutamate 862 to glutamate 874 show a composition bias toward acidic residues.

It belongs to the protein kinase superfamily. Tyr protein kinase family. AXL/UFO subfamily. Tyrosine phosphorylated upon receptor stimulation.

The protein localises to the cell membrane. It carries out the reaction L-tyrosyl-[protein] + ATP = O-phospho-L-tyrosyl-[protein] + ADP + H(+). Its function is as follows. May be involved in cell adhesion processes, particularly in the central nervous system. In Xenopus tropicalis (Western clawed frog), this protein is Tyrosine-protein kinase receptor TYRO3 (tyro3).